Consider the following 49-residue polypeptide: uncharacterized protein (49 aa).

Belongs to the ELIP/psbS family.

The protein resides in the plastid. Its subcellular location is the cyanelle. Functionally, possible role in chlorophyll and/or carotenoid binding. This is an uncharacterized protein from Cyanophora paradoxa.